A 447-amino-acid polypeptide reads, in one-letter code: Probable rhamnogalacturonase C (447 aa).

A signal peptide spans 1-19 (MQVKLFYTLALWAPILVSA). 2 N-linked (GlcNAc...) asparagine glycosylation sites follow: Asn37 and Asn65. Residues Cys40 and Cys66 are joined by a disulfide bond. Residue Asp217 is the Proton donor of the active site. Cys219 and Cys236 are oxidised to a cystine. N-linked (GlcNAc...) asparagine glycosylation is found at Asn237 and Asn252. The active site involves His291. N-linked (GlcNAc...) asparagine glycosylation is present at Asn316. 2 cysteine pairs are disulfide-bonded: Cys338/Cys344 and Cys366/Cys375.

Belongs to the glycosyl hydrolase 28 family.

It is found in the secreted. In terms of biological role, pectinolytic enzymes consist of four classes of enzymes: pectine lyase, polygalacturonase, pectin methylesterase and rhamnogalacturonase. Hydrolyzes alpha-D-galacturonopyranosyl-(1,2)-alpha-L-rhamnopyranosyl linkages in the backbone of the hairy regions of pectins. The polypeptide is Probable rhamnogalacturonase C (rhgC) (Aspergillus flavus (strain ATCC 200026 / FGSC A1120 / IAM 13836 / NRRL 3357 / JCM 12722 / SRRC 167)).